The chain runs to 447 residues: UDP-glycosyltransferase 76E5 (447 aa).

UDP-alpha-D-glucose-binding positions include Ser-272, Ala-324–Gln-326, His-341–Glu-349, and Asn-363–Gln-366.

This sequence belongs to the UDP-glycosyltransferase family.

The polypeptide is UDP-glycosyltransferase 76E5 (UGT76E5) (Arabidopsis thaliana (Mouse-ear cress)).